The sequence spans 88 residues: Apolipoprotein C-I (88 aa).

The signal sequence occupies residues 1 to 26 (MRLFIALPVLIVVVAMTLEGPAPAQA).

The protein belongs to the apolipoprotein C1 family. As to expression, adult and fetal liver.

The protein localises to the secreted. Functionally, inhibitor of lipoprotein binding to the low density lipoprotein (LDL) receptor, LDL receptor-related protein, and very low density lipoprotein (VLDL) receptor. Associates with high density lipoproteins (HDL) and the triacylglycerol-rich lipoproteins in the plasma and makes up about 10% of the protein of the VLDL and 2% of that of HDL. Appears to interfere directly with fatty acid uptake and is also the major plasma inhibitor of cholesteryl ester transfer protein (CETP). Modulates the interaction of APOE with beta-migrating VLDL and inhibits binding of beta-VLDL to the LDL receptor-related protein. Binds free fatty acids and reduces their intracellular esterification. The sequence is that of Apolipoprotein C-I (Apoc1) from Mus musculus (Mouse).